Consider the following 353-residue polypeptide: 2-oxoglutarate-Fe(II) type oxidoreductase ppzD (353 aa).

The 112-residue stretch at 181–292 folds into the Fe2OG dioxygenase domain; sequence NTSELRLNHY…RYSVAYFGKP (112 aa). Residues His-208, Asp-210, and His-268 each contribute to the Fe cation site. 2-oxoglutarate is bound at residue Arg-283.

Belongs to the iron/ascorbate-dependent oxidoreductase family. The cofactor is Fe(2+).

It carries out the reaction L-proline + 2-oxoglutarate + O2 = trans-4-hydroxy-L-proline + succinate + CO2. It catalyses the reaction L-proline + 2-oxoglutarate + O2 = trans-3-hydroxy-L-proline + succinate + CO2. The catalysed reaction is D-proline + 2-oxoglutarate + O2 = cis-4-hydroxy-D-proline + succinate + CO2. It functions in the pathway secondary metabolite biosynthesis. In terms of biological role, 2-oxoglutarate-Fe(II) type oxidoreductase; part of the gene cluster that mediates the biosynthesis of pyrrolopyrazines, secondary metabolites showing insecticidal activity. Within the pathway, ppzD converts L-proline into trans-4-hydroxy-L-proline as a major product, yielding a key precursor for peramine biosynthesis. PpzD is also able to convert L-proline into trans-3-hydroxy-L-proline. The single multifunctional NRPS ppzA is sufficient to produce peramine via condensation of 1-pyrroline-5-carboxylate and arginine, N-methylation of the alpha-amino group of arginine and reduction of the thioester and the cyclization to form an iminium ion resulting in release from the peptide synthetase. Deprotonation of this intermediate and oxidation of the pyrroline ring would give rise to peramine. In Epichloe species that produce only peramine, the peramine synthetase gene is not localized in a gene cluster, in contrast to Metarhizium species that contain additional pyrrolopyrazine biosynthesis genes. The 2-oxoglutarate-Fe(II) type oxidoreductase ppzC hydroxylates peramine to yield the newly identified compound 8-hydroxyperamine whereas ppzD converts L-proline into trans-4-hydroxy-L-proline, a precursor of peramine biosynthesis. In Metarhizium rileyi (strain RCEF 4871) (Nomuraea rileyi), this protein is 2-oxoglutarate-Fe(II) type oxidoreductase ppzD.